Consider the following 836-residue polypeptide: Probable serine/threonine-protein kinase dyrk1 (836 aa).

A compositionally biased stretch (low complexity) spans 99–278 (QQQYQQQHNN…SSNNNNNNKQ (180 aa)). Positions 99–286 (QQQYQQQHNN…KQSKYNDGYD (188 aa)) are disordered. The Protein kinase domain maps to 304 to 624 (FEIISSLGKG…PLEALQHSFF (321 aa)). Residues 310–318 (LGKGSFGQV) and Lys-333 each bind ATP. The active-site Proton acceptor is the Asp-432. 3 disordered regions span residues 627–697 (DETS…QQQQ), 718–767 (TYSP…INSN), and 785–836 (NIYN…NNNI). Residues 630–697 (SQPPQQQSQQ…QQLQQQQQQQ (68 aa)) show a composition bias toward low complexity. Polar residues predominate over residues 718 to 728 (TYSPTTQQSNH). Residues 729–744 (KLVDQMKKASMKDKSP) are compositionally biased toward basic and acidic residues. Residues 785-816 (NIYNNNNNNNNNNNNNNNNNNSNNYNNSNELS) are compositionally biased toward low complexity.

It belongs to the protein kinase superfamily. CMGC Ser/Thr protein kinase family. MNB/DYRK subfamily.

The catalysed reaction is L-seryl-[protein] + ATP = O-phospho-L-seryl-[protein] + ADP + H(+). It carries out the reaction L-threonyl-[protein] + ATP = O-phospho-L-threonyl-[protein] + ADP + H(+). The enzyme catalyses L-tyrosyl-[protein] + ATP = O-phospho-L-tyrosyl-[protein] + ADP + H(+). The sequence is that of Probable serine/threonine-protein kinase dyrk1 (dyrk1) from Dictyostelium discoideum (Social amoeba).